A 138-amino-acid polypeptide reads, in one-letter code: Small ribosomal subunit protein bS18m (138 aa).

Belongs to the bacterial ribosomal protein bS18 family. As to quaternary structure, component of the mitochondrial small ribosomal subunit. Mature mitochondrial ribosomes consist of a small (37S) and a large (54S) subunit. The 37S subunit contains at least 33 different proteins and 1 molecule of RNA (15S). The 54S subunit contains at least 45 different proteins and 1 molecule of RNA (21S).

Its subcellular location is the mitochondrion. This Saccharomyces cerevisiae (strain RM11-1a) (Baker's yeast) protein is Small ribosomal subunit protein bS18m (RSM18).